Consider the following 608-residue polypeptide: UvrABC system protein C (608 aa).

The GIY-YIG domain occupies 15–93 (HQPGVYRMYN…IKQYLPKYNV (79 aa)). The region spanning 203–238 (RQVIQTLVKQMESASQSLNFEKAAIIRDQIQAMRRV) is the UVR domain.

It belongs to the UvrC family. As to quaternary structure, interacts with UvrB in an incision complex.

It localises to the cytoplasm. Functionally, the UvrABC repair system catalyzes the recognition and processing of DNA lesions. UvrC both incises the 5' and 3' sides of the lesion. The N-terminal half is responsible for the 3' incision and the C-terminal half is responsible for the 5' incision. This chain is UvrABC system protein C, found in Aliivibrio fischeri (strain ATCC 700601 / ES114) (Vibrio fischeri).